The primary structure comprises 737 residues: Autophagy-related protein 22 (737 aa).

Positions 115–154 (RMSPANAGDNSDSYPYGDDTDGDSSSGLPPPRYPGDDTRP) are disordered. Residues 125–141 (SDSYPYGDDTDGDSSSG) are compositionally biased toward low complexity. The next 4 helical transmembrane spans lie at 166–186 (YAFA…PILL), 232–252 (SFAM…VVSI), 264–284 (KLLL…IFIS), and 289–309 (LIGA…FVLL). The disordered stretch occupies residues 327–353 (GDYGSPGYATTEEGDDEDDEYQEDSTR). A compositionally biased stretch (acidic residues) spans 338-349 (EEGDDEDDEYQE). Asn354 carries an N-linked (GlcNAc...) asparagine glycan. Residues 395 to 415 (GIGIGYIAGLFLQCVAIAILI) traverse the membrane as a helical segment. Residue Asn419 is glycosylated (N-linked (GlcNAc...) asparagine). 7 helical membrane-spanning segments follow: residues 426–446 (IVLC…AMWL), 487–507 (LVDI…IATT), 524–544 (WALG…AFSW), 559–579 (ILAC…GYLP), 593–613 (WEMY…SGYC), 632–652 (LYAI…GAII), and 661–681 (AFWF…FINV).

The protein belongs to the ATG22 family.

It localises to the vacuole membrane. Vacuolar effluxer which mediate the efflux of amino acids resulting from autophagic degradation. The release of autophagic amino acids allows the maintenance of protein synthesis and viability during nitrogen starvation. The polypeptide is Autophagy-related protein 22 (apg-11) (Neurospora crassa (strain ATCC 24698 / 74-OR23-1A / CBS 708.71 / DSM 1257 / FGSC 987)).